Consider the following 89-residue polypeptide: UPF0237 protein DIP1286 (89 aa).

Residues 4-78 (IISVTGADHT…KDQNLVIRIQ (75 aa)) form the ACT domain.

This sequence belongs to the UPF0237 family.

This chain is UPF0237 protein DIP1286, found in Corynebacterium diphtheriae (strain ATCC 700971 / NCTC 13129 / Biotype gravis).